A 247-amino-acid polypeptide reads, in one-letter code: Probable phosphatase Shew_1420 (247 aa).

His-8, His-10, His-16, His-41, Glu-74, His-102, His-132, Asp-193, and His-195 together coordinate Zn(2+).

It belongs to the PHP family. Zn(2+) is required as a cofactor.

This Shewanella loihica (strain ATCC BAA-1088 / PV-4) protein is Probable phosphatase Shew_1420.